Consider the following 207-residue polypeptide: ATP synthase subunit b 2 (207 aa).

Residues 53-72 (TYASQLLWLVITFSVFYLLM) form a helical membrane-spanning segment.

It belongs to the ATPase B chain family. In terms of assembly, F-type ATPases have 2 components, F(1) - the catalytic core - and F(0) - the membrane proton channel. F(1) has five subunits: alpha(3), beta(3), gamma(1), delta(1), epsilon(1). F(0) has three main subunits: a(1), b(2) and c(10-14). The alpha and beta chains form an alternating ring which encloses part of the gamma chain. F(1) is attached to F(0) by a central stalk formed by the gamma and epsilon chains, while a peripheral stalk is formed by the delta and b chains.

It localises to the cell inner membrane. Functionally, f(1)F(0) ATP synthase produces ATP from ADP in the presence of a proton or sodium gradient. F-type ATPases consist of two structural domains, F(1) containing the extramembraneous catalytic core and F(0) containing the membrane proton channel, linked together by a central stalk and a peripheral stalk. During catalysis, ATP synthesis in the catalytic domain of F(1) is coupled via a rotary mechanism of the central stalk subunits to proton translocation. In terms of biological role, component of the F(0) channel, it forms part of the peripheral stalk, linking F(1) to F(0). The b'-subunit is a diverged and duplicated form of b found in plants and photosynthetic bacteria. The sequence is that of ATP synthase subunit b 2 (atpF2) from Rhizobium leguminosarum bv. trifolii (strain WSM2304).